Reading from the N-terminus, the 166-residue chain is MVDAHTRKTLAAIPLLRVNAGPRSGDLWRARHKEELMSLITYVKNNKENDNDWFRLESNPEGTRWFGKCWIVVDMLKYEFDLEFDIPVAYPSTAPEIAIPELDGKTAKMYRGGKICLTDHFKPLWARNVPHFGIAHAMALGLGPWLAVEIPDLVSKGIVKHKETSS.

Residue cysteine 116 is the Glycyl thioester intermediate of the active site.

This sequence belongs to the ubiquitin-conjugating enzyme family. UFC1 subfamily.

Functionally, E2-like enzyme which forms an intermediate with UFM1 via a thioester linkage. The polypeptide is Ubiquitin-fold modifier-conjugating enzyme 1 (Monosiga brevicollis (Choanoflagellate)).